The sequence spans 331 residues: Phenylalanine--tRNA ligase alpha subunit (331 aa).

Residue glutamate 258 coordinates Mg(2+).

It belongs to the class-II aminoacyl-tRNA synthetase family. Phe-tRNA synthetase alpha subunit type 1 subfamily. In terms of assembly, tetramer of two alpha and two beta subunits. Mg(2+) serves as cofactor.

It localises to the cytoplasm. The enzyme catalyses tRNA(Phe) + L-phenylalanine + ATP = L-phenylalanyl-tRNA(Phe) + AMP + diphosphate + H(+). The chain is Phenylalanine--tRNA ligase alpha subunit (pheS) from Synechocystis sp. (strain ATCC 27184 / PCC 6803 / Kazusa).